We begin with the raw amino-acid sequence, 394 residues long: Na(+)/H(+) antiporter NhaA (394 aa).

A run of 11 helical transmembrane segments spans residues 17 to 37 (ILLMVAVALAMILANSPLAGV), 59 to 79 (LLLWINDGLMALFFLLIGLEV), 95 to 115 (SLPSIAAIGGMVFPALFYLAF), 124 to 144 (VGWAIPAATDIAFALGIMALL), 154 to 174 (VFLLALAIIDDLGVIVIIALF), 177 to 197 (TDLSMTSLVIAAVSIVLMVAL), 213 to 233 (FILWVAVLKSGVHATLAGVII), 261 to 281 (FMILPVFAFANAGLSLTNMTL), 287 to 307 (PITLGIIMGLLLGKPIGVLLF), 328 to 348 (IIPVAVMCGIGFTMSVFIASL), and 363 to 383 (LGILTGSLLAALIGYFWLAKV).

The protein belongs to the NhaA Na(+)/H(+) (TC 2.A.33) antiporter family.

Its subcellular location is the cell inner membrane. It catalyses the reaction Na(+)(in) + 2 H(+)(out) = Na(+)(out) + 2 H(+)(in). Its function is as follows. Na(+)/H(+) antiporter that extrudes sodium in exchange for external protons. The chain is Na(+)/H(+) antiporter NhaA from Shewanella frigidimarina (strain NCIMB 400).